The chain runs to 150 residues: Regulatory protein RecX (150 aa).

This sequence belongs to the RecX family.

The protein resides in the cytoplasm. Modulates RecA activity. This is Regulatory protein RecX from Ectopseudomonas mendocina (strain ymp) (Pseudomonas mendocina).